The chain runs to 704 residues: Phosphate acetyltransferase (704 aa).

The tract at residues 379–704 (AFRYQVVQRA…AIQADAQAPA (326 aa)) is phosphate acetyltransferase.

It in the N-terminal section; belongs to the CobB/CobQ family. This sequence in the C-terminal section; belongs to the phosphate acetyltransferase and butyryltransferase family. In terms of assembly, homohexamer.

It is found in the cytoplasm. The catalysed reaction is acetyl-CoA + phosphate = acetyl phosphate + CoA. It functions in the pathway metabolic intermediate biosynthesis; acetyl-CoA biosynthesis; acetyl-CoA from acetate: step 2/2. Activity is increased under anaerobic growth conditions. Involved in acetate metabolism. In combination with LdhA and AckA, allows fermentation of pyruvate, enhancing long-term survival under anaerobic conditions. The polypeptide is Phosphate acetyltransferase (pta) (Pseudomonas aeruginosa (strain ATCC 15692 / DSM 22644 / CIP 104116 / JCM 14847 / LMG 12228 / 1C / PRS 101 / PAO1)).